A 661-amino-acid polypeptide reads, in one-letter code: UvrABC system protein B (661 aa).

Residues 23-180 enclose the Helicase ATP-binding domain; the sequence is EGLQKGYRIQ…THLARIGYER (158 aa). 36-43 serves as a coordination point for ATP; the sequence is GVTGSGKT. The Beta-hairpin signature appears at 89-112; it reads YYDYYQPEAYIPTRDLYIEKNADI. One can recognise a Helicase C-terminal domain in the interval 426 to 592; the sequence is QIDDLVNEIA…TIIKPLDEEI (167 aa). Residues 620–655 enclose the UVR domain; the sequence is EEYIALLEEEMYKAASELRYEDAARLRDELFNIREK.

This sequence belongs to the UvrB family. Forms a heterotetramer with UvrA during the search for lesions. Interacts with UvrC in an incision complex.

The protein resides in the cytoplasm. In terms of biological role, the UvrABC repair system catalyzes the recognition and processing of DNA lesions. A damage recognition complex composed of 2 UvrA and 2 UvrB subunits scans DNA for abnormalities. Upon binding of the UvrA(2)B(2) complex to a putative damaged site, the DNA wraps around one UvrB monomer. DNA wrap is dependent on ATP binding by UvrB and probably causes local melting of the DNA helix, facilitating insertion of UvrB beta-hairpin between the DNA strands. Then UvrB probes one DNA strand for the presence of a lesion. If a lesion is found the UvrA subunits dissociate and the UvrB-DNA preincision complex is formed. This complex is subsequently bound by UvrC and the second UvrB is released. If no lesion is found, the DNA wraps around the other UvrB subunit that will check the other stand for damage. The polypeptide is UvrABC system protein B (Thermosipho africanus (strain TCF52B)).